The following is a 162-amino-acid chain: Heat shock protein beta-6 (162 aa).

The tract at residues methionine 1 to glycine 72 is involved in stabilization of the HSPB1:HSBP6 heterodimer. Phosphoserine is present on serine 16. Residue glutamine 31 forms an Isoglutamyl lysine isopeptide (Gln-Lys) (interchain with K-162) linkage. A sHSP domain is found at arginine 56–lysine 162. Glutamine 66 is subject to Deamidated glutamine. Serine 157 is modified (phosphoserine). An Isoglutamyl lysine isopeptide (Lys-Gln) (interchain with Q-31) cross-link involves residue lysine 162.

Belongs to the small heat shock protein (HSP20) family. Homodimer. Small heat shock proteins form high molecular mass oligomers containing variable number of monomers; these oligomers display a very flexible quaternary structure easily exchanging their subunits. Heterooligomer with HSPB1; formed through oligomerization of HSPB1:HSBP6 dimers; subunit exchange leads to formation of at least two different heterooligomeric complexes, differing in variable quantities of HSPB1 and HSPB6 homodimers in addition to HSPB1:HSPB6 heterodimers. Heterooligomer with CRYAB; large heterooligomers consist of CRYAB homodimers and HSPB5:HSPB6 heterodimers but lacking HSPB6 homodimers. Interacts with BAG3. Interacts (phosphorylated) with YWHAZ. Interacts with PDE4A and PDE4D; required for maintenance of the non-phosphorylated state of HSPB6 under basal conditions. Interacts with KDR. Interacts with PRKD1. Post-translationally, the N-terminus is blocked. In terms of processing, phosphorylated at Ser-16 by PKA and probably PKD1K; required to protect cardiomyocytes from apoptosis. As to expression, widely expressed. High expression in muscle tissues.

The protein localises to the cytoplasm. It localises to the nucleus. Its subcellular location is the secreted. Its function is as follows. Small heat shock protein which functions as a molecular chaperone probably maintaining denatured proteins in a folding-competent state. Seems to have versatile functions in various biological processes. Plays a role in regulating muscle function such as smooth muscle vasorelaxation and cardiac myocyte contractility. May regulate myocardial angiogenesis implicating KDR. Overexpression mediates cardioprotection and angiogenesis after induced damage. Stabilizes monomeric YWHAZ thereby supporting YWHAZ chaperone-like activity. This chain is Heat shock protein beta-6 (Hspb6), found in Rattus norvegicus (Rat).